Here is a 418-residue protein sequence, read N- to C-terminus: Serine hydroxymethyltransferase (418 aa).

Residues leucine 121 and 125–127 (GHL) contribute to the (6S)-5,6,7,8-tetrahydrofolate site. At lysine 230 the chain carries N6-(pyridoxal phosphate)lysine. 355–357 (SPF) provides a ligand contact to (6S)-5,6,7,8-tetrahydrofolate.

The protein belongs to the SHMT family. In terms of assembly, homodimer. It depends on pyridoxal 5'-phosphate as a cofactor.

The protein resides in the cytoplasm. The catalysed reaction is (6R)-5,10-methylene-5,6,7,8-tetrahydrofolate + glycine + H2O = (6S)-5,6,7,8-tetrahydrofolate + L-serine. Its pathway is one-carbon metabolism; tetrahydrofolate interconversion. It participates in amino-acid biosynthesis; glycine biosynthesis; glycine from L-serine: step 1/1. Catalyzes the reversible interconversion of serine and glycine with tetrahydrofolate (THF) serving as the one-carbon carrier. This reaction serves as the major source of one-carbon groups required for the biosynthesis of purines, thymidylate, methionine, and other important biomolecules. Also exhibits THF-independent aldolase activity toward beta-hydroxyamino acids, producing glycine and aldehydes, via a retro-aldol mechanism. The polypeptide is Serine hydroxymethyltransferase (Streptococcus agalactiae serotype V (strain ATCC BAA-611 / 2603 V/R)).